The following is a 295-amino-acid chain: 3-hydroxy-5-phosphonooxypentane-2,4-dione thiolase (295 aa).

K203 serves as the catalytic Schiff-base intermediate with substrate.

The protein belongs to the DeoC/FbaB aldolase family. Homodecamer.

It localises to the cytoplasm. The enzyme catalyses dihydroxyacetone phosphate + acetyl-CoA = 3-hydroxy-2,4-dioxopentyl phosphate + CoA. Involved in the degradation of phospho-AI-2, thereby terminating induction of the lsr operon and closing the AI-2 signaling cycle. Catalyzes the transfer of an acetyl moiety from 3-hydroxy-5-phosphonooxypentane-2,4-dione to CoA to form glycerone phosphate and acetyl-CoA. The sequence is that of 3-hydroxy-5-phosphonooxypentane-2,4-dione thiolase from Enterobacter sp. (strain 638).